The sequence spans 202 residues: Shikimate kinase (202 aa).

Residue 20 to 25 (GSGKST) coordinates ATP. A Mg(2+)-binding site is contributed by serine 24. Aspartate 42, arginine 66, and glycine 88 together coordinate substrate. ATP is bound at residue arginine 126. Position 153 (arginine 153) interacts with substrate.

Belongs to the shikimate kinase family. Monomer. It depends on Mg(2+) as a cofactor.

The protein localises to the cytoplasm. The catalysed reaction is shikimate + ATP = 3-phosphoshikimate + ADP + H(+). It functions in the pathway metabolic intermediate biosynthesis; chorismate biosynthesis; chorismate from D-erythrose 4-phosphate and phosphoenolpyruvate: step 5/7. Functionally, catalyzes the specific phosphorylation of the 3-hydroxyl group of shikimic acid using ATP as a cosubstrate. In Chlorobium luteolum (strain DSM 273 / BCRC 81028 / 2530) (Pelodictyon luteolum), this protein is Shikimate kinase.